A 377-amino-acid polypeptide reads, in one-letter code: Nitric oxide reductase FlRd-NAD(+) reductase (377 aa).

This sequence belongs to the FAD-dependent oxidoreductase family. FAD is required as a cofactor.

It localises to the cytoplasm. The enzyme catalyses 2 reduced [nitric oxide reductase rubredoxin domain] + NAD(+) + H(+) = 2 oxidized [nitric oxide reductase rubredoxin domain] + NADH. The protein operates within nitrogen metabolism; nitric oxide reduction. In terms of biological role, one of at least two accessory proteins for anaerobic nitric oxide (NO) reductase. Reduces the rubredoxin moiety of NO reductase. In Escherichia coli O127:H6 (strain E2348/69 / EPEC), this protein is Nitric oxide reductase FlRd-NAD(+) reductase.